Here is a 207-residue protein sequence, read N- to C-terminus: Holliday junction branch migration complex subunit RuvA (207 aa).

Residues 1–64 (MIGLISGQVQ…EDAQLLYGFI (64 aa)) are domain I. The segment at 65–143 (DRKERDVFRQ…NIEVDNSNLE (79 aa)) is domain II. The interval 144 to 152 (FAIQPAPIS) is flexible linker. Residues 153–207 (AEDSIIAEVEGALMSLGYKEKEAQQAIKAAKSNGETFADTQSLLKATLQQFQSFK) are domain III.

The protein belongs to the RuvA family. In terms of assembly, homotetramer. Forms an RuvA(8)-RuvB(12)-Holliday junction (HJ) complex. HJ DNA is sandwiched between 2 RuvA tetramers; dsDNA enters through RuvA and exits via RuvB. An RuvB hexamer assembles on each DNA strand where it exits the tetramer. Each RuvB hexamer is contacted by two RuvA subunits (via domain III) on 2 adjacent RuvB subunits; this complex drives branch migration. In the full resolvosome a probable DNA-RuvA(4)-RuvB(12)-RuvC(2) complex forms which resolves the HJ.

The protein resides in the cytoplasm. In terms of biological role, the RuvA-RuvB-RuvC complex processes Holliday junction (HJ) DNA during genetic recombination and DNA repair, while the RuvA-RuvB complex plays an important role in the rescue of blocked DNA replication forks via replication fork reversal (RFR). RuvA specifically binds to HJ cruciform DNA, conferring on it an open structure. The RuvB hexamer acts as an ATP-dependent pump, pulling dsDNA into and through the RuvAB complex. HJ branch migration allows RuvC to scan DNA until it finds its consensus sequence, where it cleaves and resolves the cruciform DNA. This Psychrobacter arcticus (strain DSM 17307 / VKM B-2377 / 273-4) protein is Holliday junction branch migration complex subunit RuvA.